The sequence spans 913 residues: E3 ubiquitin-protein ligase ZNRF3 (913 aa).

The segment at 1-32 (MRPRSGGRPGAPGRRRRRLRRGPRGRRLPPPP) is disordered. A signal peptide spans 1–52 (MRPRSGGRPGAPGRRRRRLRRGPRGRRLPPPPPLPLLLGLLLAAAGPGAARA). The span at 13–27 (GRRRRRLRRGPRGRR) shows a compositional bias: basic residues. The Extracellular segment spans residues 53–216 (KETAFVEVVL…PRQPTEYFDM (164 aa)). The helical transmembrane segment at 217–237 (GIFLAFFVVVSLVCLILLVKI) threads the bilayer. Residues 238–913 (KLKQRRSQNS…GSGPGIGTGA (676 aa)) are Cytoplasmic-facing. An RING-type; atypical zinc finger spans residues 290 to 331 (CAICLEKYIDGEELRVIPCTHRFHRKCVDPWLLQHHTCPHCR). Disordered regions lie at residues 601-669 (AVHL…GLEV) and 855-913 (REEE…GTGA). Composition is skewed to polar residues over residues 634–664 (SGDQLSTCSLEMNYSSNSSLEPRGPNSSTSE) and 881–890 (ASLSSAPQDT). Gly residues predominate over residues 903–913 (PGSGPGIGTGA).

The protein belongs to the ZNRF3 family. Interacts with LRP6, FZD4, FZD5, FZD6 and FZD8. Interacts with RSPO1; interaction promotes indirect interaction with LGR4 and membrane clearance of ZNRF3. Interacts with LMBR1L.

It localises to the cell membrane. The enzyme catalyses S-ubiquitinyl-[E2 ubiquitin-conjugating enzyme]-L-cysteine + [acceptor protein]-L-lysine = [E2 ubiquitin-conjugating enzyme]-L-cysteine + N(6)-ubiquitinyl-[acceptor protein]-L-lysine.. The protein operates within protein modification; protein ubiquitination. Its activity is regulated as follows. Negatively regulated by R-spondin proteins such as RSPO1: interaction with RSPO1 induces the indirect association between ZNRF3 and LGR4, promoting membrane clearance of ZNRF3. E3 ubiquitin-protein ligase that acts as a negative regulator of the Wnt signaling pathway by mediating the ubiquitination and subsequent degradation of Wnt receptor complex components Frizzled and LRP6. Acts on both canonical and non-canonical Wnt signaling pathway. Acts as a tumor suppressor in the intestinal stem cell zone by inhibiting the Wnt signaling pathway, thereby restricting the size of the intestinal stem cell zone. Along with RSPO2 and RNF43, constitutes a master switch that governs limb specification. The sequence is that of E3 ubiquitin-protein ligase ZNRF3 (Znrf3) from Mus musculus (Mouse).